A 72-amino-acid polypeptide reads, in one-letter code: Translational regulator CsrA (72 aa).

It belongs to the CsrA/RsmA family. In terms of assembly, homodimer; the beta-strands of each monomer intercalate to form a hydrophobic core, while the alpha-helices form wings that extend away from the core.

Its subcellular location is the cytoplasm. Its function is as follows. A translational regulator that binds mRNA to regulate translation initiation and/or mRNA stability. Usually binds in the 5'-UTR at or near the Shine-Dalgarno sequence preventing ribosome-binding, thus repressing translation. Its main target seems to be the major flagellin gene, while its function is anatagonized by FliW. The sequence is that of Translational regulator CsrA from Clostridium novyi (strain NT).